We begin with the raw amino-acid sequence, 147 residues long: uncharacterized protein (147 aa).

The protein belongs to the RTX toxin acyltransferase family.

This is an uncharacterized protein from Synechocystis sp. (strain ATCC 27184 / PCC 6803 / Kazusa).